The following is a 290-amino-acid chain: 33 kDa chaperonin (290 aa).

Intrachain disulfides connect C231–C233 and C263–C266.

Belongs to the HSP33 family. Under oxidizing conditions two disulfide bonds are formed involving the reactive cysteines. Under reducing conditions zinc is bound to the reactive cysteines and the protein is inactive.

It localises to the cytoplasm. Redox regulated molecular chaperone. Protects both thermally unfolding and oxidatively damaged proteins from irreversible aggregation. Plays an important role in the bacterial defense system toward oxidative stress. In Thermotoga petrophila (strain ATCC BAA-488 / DSM 13995 / JCM 10881 / RKU-1), this protein is 33 kDa chaperonin.